The sequence spans 232 residues: Somatolactin (232 aa).

The first 16 residues, 1 to 16, serve as a signal peptide directing secretion; that stretch reads MHNWKGVWLCSLFLTF. Disulfide bonds link C31–C41, C91–C206, and C223–C231. N147 carries N-linked (GlcNAc...) asparagine glycosylation.

Belongs to the somatotropin/prolactin family. In terms of tissue distribution, pituitary gland.

The protein localises to the secreted. The sequence is that of Somatolactin from Protopterus annectens (African lungfish).